A 313-amino-acid polypeptide reads, in one-letter code: Ribosomal RNA small subunit methyltransferase H (313 aa).

S-adenosyl-L-methionine contacts are provided by residues 35–37 (GGH), D55, F79, D101, and Q108.

It belongs to the methyltransferase superfamily. RsmH family.

It localises to the cytoplasm. It catalyses the reaction cytidine(1402) in 16S rRNA + S-adenosyl-L-methionine = N(4)-methylcytidine(1402) in 16S rRNA + S-adenosyl-L-homocysteine + H(+). Its function is as follows. Specifically methylates the N4 position of cytidine in position 1402 (C1402) of 16S rRNA. This is Ribosomal RNA small subunit methyltransferase H from Escherichia coli O139:H28 (strain E24377A / ETEC).